We begin with the raw amino-acid sequence, 125 residues long: Gem-associated protein 7 (125 aa).

Met-1 is subject to N-acetylmethionine. An SUZ-C domain is found at 1-29 (MQTPLATPVPVLRLPRGPDGSNRGFAPDG). Residues 1 to 52 (MQTPLATPVPVLRLPRGPDGSNRGFAPDGRRAPPKPEVPEPPESRESWEQQA) are disordered. Thr-3 is modified (phosphothreonine). Residues 59-125 (RYLRSLLAMV…SDIISYTFKP (67 aa)) enclose the Sm domain.

Belongs to the gemin-7 family. In terms of assembly, part of the core SMN complex that contains SMN1, GEMIN2/SIP1, DDX20/GEMIN3, GEMIN4, GEMIN5, GEMIN6, GEMIN7, GEMIN8 and STRAP/UNRIP. Part of the SMN-Sm complex that contains SMN1, GEMIN2/SIP1, DDX20/GEMIN3, GEMIN4, GEMIN5, GEMIN6, GEMIN7, GEMIN8, STRAP/UNRIP and the Sm proteins SNRPB, SNRPD1, SNRPD2, SNRPD3, SNRPE, SNRPF and SNRPG. Interacts with GEMIN6; the interaction is direct. Interacts with STRAP/UNRIP; the interaction is direct. Interacts with GEMIN8; the interaction is direct. Interacts with SNRPB, SNRPD2, SNRPD3 and SNRPE; the interaction is direct.

The protein localises to the nucleus. The protein resides in the nucleoplasm. It localises to the gem. Its subcellular location is the cytoplasm. Functionally, the SMN complex catalyzes the assembly of small nuclear ribonucleoproteins (snRNPs), the building blocks of the spliceosome, and thereby plays an important role in the splicing of cellular pre-mRNAs. Most spliceosomal snRNPs contain a common set of Sm proteins SNRPB, SNRPD1, SNRPD2, SNRPD3, SNRPE, SNRPF and SNRPG that assemble in a heptameric protein ring on the Sm site of the small nuclear RNA to form the core snRNP (Sm core). In the cytosol, the Sm proteins SNRPD1, SNRPD2, SNRPE, SNRPF and SNRPG are trapped in an inactive 6S pICln-Sm complex by the chaperone CLNS1A that controls the assembly of the core snRNP. To assemble core snRNPs, the SMN complex accepts the trapped 5Sm proteins from CLNS1A forming an intermediate. Binding of snRNA inside 5Sm triggers eviction of the SMN complex, thereby allowing binding of SNRPD3 and SNRPB to complete assembly of the core snRNP. In Bos taurus (Bovine), this protein is Gem-associated protein 7 (GEMIN7).